The primary structure comprises 384 residues: PqqA peptide cyclase (384 aa).

The Radical SAM core domain maps to 5–220 (VGLPLWLLAE…TNEYREKLKA (216 aa)). Positions 19, 23, and 26 each coordinate [4Fe-4S] cluster.

Belongs to the radical SAM superfamily. PqqE family. In terms of assembly, interacts with PqqD. The interaction is necessary for activity of PqqE. [4Fe-4S] cluster is required as a cofactor.

It carries out the reaction [PQQ precursor protein] + S-adenosyl-L-methionine = E-Y cross-linked-[PQQ precursor protein] + 5'-deoxyadenosine + L-methionine + H(+). It functions in the pathway cofactor biosynthesis; pyrroloquinoline quinone biosynthesis. Functionally, catalyzes the cross-linking of a glutamate residue and a tyrosine residue in the PqqA protein as part of the biosynthesis of pyrroloquinoline quinone (PQQ). The polypeptide is PqqA peptide cyclase (Acinetobacter baumannii (strain ACICU)).